The sequence spans 642 residues: Threonine--tRNA ligase (642 aa).

In terms of domain architecture, TGS spans Met-1–Thr-61. The catalytic stretch occupies residues Asp-243–Pro-534. Positions 334, 385, and 511 each coordinate Zn(2+).

Belongs to the class-II aminoacyl-tRNA synthetase family. Homodimer. Zn(2+) is required as a cofactor.

The protein localises to the cytoplasm. The catalysed reaction is tRNA(Thr) + L-threonine + ATP = L-threonyl-tRNA(Thr) + AMP + diphosphate + H(+). Its function is as follows. Catalyzes the attachment of threonine to tRNA(Thr) in a two-step reaction: L-threonine is first activated by ATP to form Thr-AMP and then transferred to the acceptor end of tRNA(Thr). Also edits incorrectly charged L-seryl-tRNA(Thr). The polypeptide is Threonine--tRNA ligase (Salmonella agona (strain SL483)).